The primary structure comprises 161 residues: Cyclic pyranopterin monophosphate synthase (161 aa).

Substrate-binding positions include 75-77 and 113-114; these read LCH and ME. The active site involves aspartate 128.

The protein belongs to the MoaC family. Homohexamer; trimer of dimers.

It carries out the reaction (8S)-3',8-cyclo-7,8-dihydroguanosine 5'-triphosphate = cyclic pyranopterin phosphate + diphosphate. It functions in the pathway cofactor biosynthesis; molybdopterin biosynthesis. Its function is as follows. Catalyzes the conversion of (8S)-3',8-cyclo-7,8-dihydroguanosine 5'-triphosphate to cyclic pyranopterin monophosphate (cPMP). This chain is Cyclic pyranopterin monophosphate synthase, found in Shigella sonnei (strain Ss046).